The sequence spans 474 residues: ATP synthase subunit beta (474 aa).

151-158 (GGAGVGKT) serves as a coordination point for ATP.

This sequence belongs to the ATPase alpha/beta chains family. As to quaternary structure, F-type ATPases have 2 components, CF(1) - the catalytic core - and CF(0) - the membrane proton channel. CF(1) has five subunits: alpha(3), beta(3), gamma(1), delta(1), epsilon(1). CF(0) has three main subunits: a(1), b(2) and c(9-12). The alpha and beta chains form an alternating ring which encloses part of the gamma chain. CF(1) is attached to CF(0) by a central stalk formed by the gamma and epsilon chains, while a peripheral stalk is formed by the delta and b chains.

The protein localises to the cell inner membrane. The catalysed reaction is ATP + H2O + 4 H(+)(in) = ADP + phosphate + 5 H(+)(out). Produces ATP from ADP in the presence of a proton gradient across the membrane. The catalytic sites are hosted primarily by the beta subunits. The sequence is that of ATP synthase subunit beta from Paracoccus denitrificans (strain Pd 1222).